A 164-amino-acid polypeptide reads, in one-letter code: Protein-export protein SecB (164 aa).

It belongs to the SecB family. As to quaternary structure, homotetramer, a dimer of dimers. One homotetramer interacts with 1 SecA dimer.

The protein localises to the cytoplasm. One of the proteins required for the normal export of preproteins out of the cell cytoplasm. It is a molecular chaperone that binds to a subset of precursor proteins, maintaining them in a translocation-competent state. It also specifically binds to its receptor SecA. This Herminiimonas arsenicoxydans protein is Protein-export protein SecB.